The chain runs to 285 residues: Acetylglutamate kinase (285 aa).

Substrate-binding positions include 69-70 (GG), Arg-91, and Asn-183.

It belongs to the acetylglutamate kinase family. ArgB subfamily.

The protein resides in the cytoplasm. The enzyme catalyses N-acetyl-L-glutamate + ATP = N-acetyl-L-glutamyl 5-phosphate + ADP. It participates in amino-acid biosynthesis; L-arginine biosynthesis; N(2)-acetyl-L-ornithine from L-glutamate: step 2/4. Functionally, catalyzes the ATP-dependent phosphorylation of N-acetyl-L-glutamate. In Jannaschia sp. (strain CCS1), this protein is Acetylglutamate kinase.